The sequence spans 552 residues: Methyl-coenzyme M reductase II subunit alpha (552 aa).

Position 150 (Gln150) interacts with coenzyme F430. Residues Arg228, 259–260, and Arg273 each bind coenzyme B; that span reads KH. Residues Tyr335 and Tyr446 each contribute to the coenzyme M site.

The protein belongs to the methyl-coenzyme M reductase alpha subunit family. MCR is a hexamer of two alpha, two beta, and two gamma chains, forming a dimer of heterotrimers. It depends on coenzyme F430 as a cofactor.

The enzyme catalyses coenzyme B + methyl-coenzyme M = methane + coenzyme M-coenzyme B heterodisulfide. It functions in the pathway one-carbon metabolism; methyl-coenzyme M reduction; methane from methyl-coenzyme M: step 1/1. In terms of biological role, component of the methyl-coenzyme M reductase (MCR) I that catalyzes the reductive cleavage of methyl-coenzyme M (CoM-S-CH3 or 2-(methylthio)ethanesulfonate) using coenzyme B (CoB or 7-mercaptoheptanoylthreonine phosphate) as reductant which results in the production of methane and the mixed heterodisulfide of CoB and CoM (CoM-S-S-CoB). This is the final step in methanogenesis. The protein is Methyl-coenzyme M reductase II subunit alpha (mrtA) of Methanocaldococcus jannaschii (strain ATCC 43067 / DSM 2661 / JAL-1 / JCM 10045 / NBRC 100440) (Methanococcus jannaschii).